The chain runs to 353 residues: MIEADRLIAATHSPREREEVQDRAIRPVSLAEYIGQPTVREQMELFIQAARGRSESLDHTLIFGPPGLGKTTLANIIAQEMGVSIKSTSGPVLERPGDLAALLTNLEPHDVLFIDEIHRLSPIVEEVLYPAMEDFQLDIMIGEGPAARSIKLDLPPFTLVGATTRAGMLTNPLRDRFGIVQRLEFYSTADLATIVSRSANILGLPLDPEGSFEIARRARGTPRIANRLLRRVRDFAEVRAKGHITKSVADLALNLLDVDEHGFDHQDRRLLLTMIEKFDGGPVGIDSLAAAISEERHTIEDVLEPYLIQQGYIMRTPRGRVVTRHAYLHFGLNIPTRMGEMPVVDEFLDAVDD.

Positions 4 to 186 (ADRLIAATHS…FGIVQRLEFY (183 aa)) are large ATPase domain (RuvB-L). ATP is bound by residues isoleucine 25, arginine 26, glycine 67, lysine 70, threonine 71, threonine 72, 133–135 (EDF), arginine 176, tyrosine 186, and arginine 223. Position 71 (threonine 71) interacts with Mg(2+). Residues 187-257 (STADLATIVS…VADLALNLLD (71 aa)) form a small ATPAse domain (RuvB-S) region. The segment at 260–353 (EHGFDHQDRR…VDEFLDAVDD (94 aa)) is head domain (RuvB-H). Residues arginine 296, arginine 315, and arginine 320 each contribute to the DNA site.

The protein belongs to the RuvB family. As to quaternary structure, homohexamer. Forms an RuvA(8)-RuvB(12)-Holliday junction (HJ) complex. HJ DNA is sandwiched between 2 RuvA tetramers; dsDNA enters through RuvA and exits via RuvB. An RuvB hexamer assembles on each DNA strand where it exits the tetramer. Each RuvB hexamer is contacted by two RuvA subunits (via domain III) on 2 adjacent RuvB subunits; this complex drives branch migration. In the full resolvosome a probable DNA-RuvA(4)-RuvB(12)-RuvC(2) complex forms which resolves the HJ.

The protein localises to the cytoplasm. The enzyme catalyses ATP + H2O = ADP + phosphate + H(+). Functionally, the RuvA-RuvB-RuvC complex processes Holliday junction (HJ) DNA during genetic recombination and DNA repair, while the RuvA-RuvB complex plays an important role in the rescue of blocked DNA replication forks via replication fork reversal (RFR). RuvA specifically binds to HJ cruciform DNA, conferring on it an open structure. The RuvB hexamer acts as an ATP-dependent pump, pulling dsDNA into and through the RuvAB complex. RuvB forms 2 homohexamers on either side of HJ DNA bound by 1 or 2 RuvA tetramers; 4 subunits per hexamer contact DNA at a time. Coordinated motions by a converter formed by DNA-disengaged RuvB subunits stimulates ATP hydrolysis and nucleotide exchange. Immobilization of the converter enables RuvB to convert the ATP-contained energy into a lever motion, pulling 2 nucleotides of DNA out of the RuvA tetramer per ATP hydrolyzed, thus driving DNA branch migration. The RuvB motors rotate together with the DNA substrate, which together with the progressing nucleotide cycle form the mechanistic basis for DNA recombination by continuous HJ branch migration. Branch migration allows RuvC to scan DNA until it finds its consensus sequence, where it cleaves and resolves cruciform DNA. The chain is Holliday junction branch migration complex subunit RuvB from Pseudomonas fluorescens (strain Pf0-1).